Reading from the N-terminus, the 323-residue chain is 4-hydroxy-3-methylbut-2-enyl diphosphate reductase (323 aa).

Cysteine 21 contacts [4Fe-4S] cluster. (2E)-4-hydroxy-3-methylbut-2-enyl diphosphate is bound by residues histidine 50 and histidine 83. Residues histidine 50 and histidine 83 each coordinate dimethylallyl diphosphate. The isopentenyl diphosphate site is built by histidine 50 and histidine 83. Position 105 (cysteine 105) interacts with [4Fe-4S] cluster. Residue histidine 133 participates in (2E)-4-hydroxy-3-methylbut-2-enyl diphosphate binding. Histidine 133 provides a ligand contact to dimethylallyl diphosphate. Position 133 (histidine 133) interacts with isopentenyl diphosphate. Glutamate 135 (proton donor) is an active-site residue. Threonine 173 contacts (2E)-4-hydroxy-3-methylbut-2-enyl diphosphate. Cysteine 203 is a [4Fe-4S] cluster binding site. (2E)-4-hydroxy-3-methylbut-2-enyl diphosphate is bound by residues serine 231, serine 232, asparagine 233, and serine 276. Dimethylallyl diphosphate contacts are provided by serine 231, serine 232, asparagine 233, and serine 276. Residues serine 231, serine 232, asparagine 233, and serine 276 each coordinate isopentenyl diphosphate.

The protein belongs to the IspH family. [4Fe-4S] cluster is required as a cofactor.

It catalyses the reaction isopentenyl diphosphate + 2 oxidized [2Fe-2S]-[ferredoxin] + H2O = (2E)-4-hydroxy-3-methylbut-2-enyl diphosphate + 2 reduced [2Fe-2S]-[ferredoxin] + 2 H(+). It carries out the reaction dimethylallyl diphosphate + 2 oxidized [2Fe-2S]-[ferredoxin] + H2O = (2E)-4-hydroxy-3-methylbut-2-enyl diphosphate + 2 reduced [2Fe-2S]-[ferredoxin] + 2 H(+). The protein operates within isoprenoid biosynthesis; dimethylallyl diphosphate biosynthesis; dimethylallyl diphosphate from (2E)-4-hydroxy-3-methylbutenyl diphosphate: step 1/1. Its pathway is isoprenoid biosynthesis; isopentenyl diphosphate biosynthesis via DXP pathway; isopentenyl diphosphate from 1-deoxy-D-xylulose 5-phosphate: step 6/6. Catalyzes the conversion of 1-hydroxy-2-methyl-2-(E)-butenyl 4-diphosphate (HMBPP) into a mixture of isopentenyl diphosphate (IPP) and dimethylallyl diphosphate (DMAPP). Acts in the terminal step of the DOXP/MEP pathway for isoprenoid precursor biosynthesis. This chain is 4-hydroxy-3-methylbut-2-enyl diphosphate reductase, found in Cutibacterium acnes (strain DSM 16379 / KPA171202) (Propionibacterium acnes).